The following is a 148-amino-acid chain: Cysteine-rich venom protein VAR6 (148 aa).

The signal sequence occupies residues 1–22 (MILLKLYLTLAAILCQSRGTTS). In terms of domain architecture, SCP spans 41–140 (NKHNDLRRTV…AGVMVGHYTQ (100 aa)).

It belongs to the CRISP family. Post-translationally, contains 8 disulfide bonds. As to expression, expressed by the venom gland.

It is found in the secreted. Functionally, blocks ryanodine receptors, and potassium channels. In Varanus acanthurus (Ridge-tailed monitor), this protein is Cysteine-rich venom protein VAR6.